We begin with the raw amino-acid sequence, 470 residues long: V-type ATP synthase beta chain (470 aa).

Belongs to the ATPase alpha/beta chains family.

Produces ATP from ADP in the presence of a proton gradient across the membrane. The V-type beta chain is a regulatory subunit. The sequence is that of V-type ATP synthase beta chain from Deinococcus geothermalis (strain DSM 11300 / CIP 105573 / AG-3a).